The primary structure comprises 517 residues: Amidophosphoribosyltransferase (517 aa).

N-acetylmethionine is present on M1. A propeptide spanning residues M1–E11 is cleaved from the precursor. C12 serves as the catalytic Nucleophile. In terms of domain architecture, Glutamine amidotransferase type-2 spans C12–H261. Residue C280 participates in [4Fe-4S] cluster binding. 3 residues coordinate Mg(2+): S327, D389, and D390. Residues C426, C503, and C506 each coordinate [4Fe-4S] cluster.

This sequence in the C-terminal section; belongs to the purine/pyrimidine phosphoribosyltransferase family. As to quaternary structure, homotetramer. Mg(2+) is required as a cofactor. The cofactor is [4Fe-4S] cluster. In terms of tissue distribution, expressed at a high level in brain, heart, liver and stomach.

The enzyme catalyses 5-phospho-beta-D-ribosylamine + L-glutamate + diphosphate = 5-phospho-alpha-D-ribose 1-diphosphate + L-glutamine + H2O. It functions in the pathway purine metabolism; IMP biosynthesis via de novo pathway; N(1)-(5-phospho-D-ribosyl)glycinamide from 5-phospho-alpha-D-ribose 1-diphosphate: step 1/2. With respect to regulation, activated by the substrate 5-phospho-alpha-D-ribosyl-1-pyrophosphate and inhibited by the purine ribonucleotides, the end products of purine biosynthesis. Catalyzes the formation of phosphoribosylamine from phosphoribosylpyrophosphate (PRPP) and glutamine. This is Amidophosphoribosyltransferase (Ppat) from Rattus norvegicus (Rat).